The following is a 148-amino-acid chain: uncharacterized protein (148 aa).

A signal peptide spans 1–22; it reads MVQTVLNSVWLWRSVLLRLTFS.

This is an uncharacterized protein from Saccharomyces cerevisiae (strain ATCC 204508 / S288c) (Baker's yeast).